A 143-amino-acid polypeptide reads, in one-letter code: uncharacterized protein (143 aa).

The Rhodanese domain maps to 50–143 (NKEDAVVVDL…GENLPLVRGK (94 aa)). At lysine 91 the chain carries N6-acetyllysine.

This is an uncharacterized protein from Escherichia coli O6:H1 (strain CFT073 / ATCC 700928 / UPEC).